Consider the following 432-residue polypeptide: Patatin-like phospholipase domain-containing protein 5 (432 aa).

In terms of domain architecture, PNPLA spans 12 to 181; it reads LSFSGSGYMG…SNNLPFSDCP (170 aa). The GXGXXG signature appears at 16 to 21; sequence GSGYMG. The short motif at 47–51 is the GXSXG element; it reads GSSSG. Residue Ser-49 is the Nucleophile of the active site. The active-site Proton acceptor is the Asp-168. Positions 168 to 170 match the DGA/G motif; that stretch reads DGA. A disordered region spans residues 404 to 423; sequence ADSGLLRQQRGTAPSGNRPL.

It carries out the reaction a triacylglycerol + H2O = a diacylglycerol + a fatty acid + H(+). Has abundant triacylglycerol lipase activity. The sequence is that of Patatin-like phospholipase domain-containing protein 5 from Mus musculus (Mouse).